The chain runs to 365 residues: Phospho-N-acetylmuramoyl-pentapeptide-transferase (365 aa).

A run of 10 helical transmembrane segments spans residues 22 to 42 (YISV…LALG), 74 to 94 (TMGG…WGNL), 95 to 115 (TSIY…IGFF), 134 to 154 (KFAL…YLLS), 168 to 188 (SLYI…IING), 201 to 221 (GLAI…AYIE), 240 to 260 (LAEV…FLWF), 267 to 287 (VFMG…IAVM), 292 to 312 (LIFF…MLQV), and 342 to 362 (KVVI…FAAI).

This sequence belongs to the glycosyltransferase 4 family. MraY subfamily. It depends on Mg(2+) as a cofactor.

The protein localises to the cell inner membrane. The enzyme catalyses UDP-N-acetyl-alpha-D-muramoyl-L-alanyl-gamma-D-glutamyl-meso-2,6-diaminopimeloyl-D-alanyl-D-alanine + di-trans,octa-cis-undecaprenyl phosphate = di-trans,octa-cis-undecaprenyl diphospho-N-acetyl-alpha-D-muramoyl-L-alanyl-D-glutamyl-meso-2,6-diaminopimeloyl-D-alanyl-D-alanine + UMP. The protein operates within cell wall biogenesis; peptidoglycan biosynthesis. Its function is as follows. Catalyzes the initial step of the lipid cycle reactions in the biosynthesis of the cell wall peptidoglycan: transfers peptidoglycan precursor phospho-MurNAc-pentapeptide from UDP-MurNAc-pentapeptide onto the lipid carrier undecaprenyl phosphate, yielding undecaprenyl-pyrophosphoryl-MurNAc-pentapeptide, known as lipid I. This chain is Phospho-N-acetylmuramoyl-pentapeptide-transferase, found in Francisella tularensis subsp. holarctica (strain OSU18).